Reading from the N-terminus, the 282-residue chain is Transcription factor LBX1 (282 aa).

A compositionally biased stretch (basic and acidic residues) spans Met-1–Leu-20. Residues Met-1–Phe-36 form a disordered region. Residues Arg-125 to Leu-184 constitute a DNA-binding region (homeobox). The disordered stretch occupies residues Glu-210–Asp-282. Over residues Ser-218–Gly-227 the composition is skewed to gly residues. Acidic residues predominate over residues Cys-269 to Asp-282.

In terms of assembly, interacts with SKOR1 which acts as a transcriptional corepressor. As to expression, expressed in the dorsal part of the spinal cord and hindbrain and in presumptive myogenic cells in lateral regions of differentiating somites.

It localises to the nucleus. In terms of biological role, transcription factor required for the development of GABAergic interneurons in the dorsal horn of the spinal cord and migration and further development of hypaxial muscle precursor cells for limb muscles, diaphragm and hypoglossal cord. In Mus musculus (Mouse), this protein is Transcription factor LBX1 (Lbx1).